The chain runs to 201 residues: Ribosomal RNA small subunit methyltransferase G (201 aa).

Residues glycine 71, phenylalanine 76, 120–121 (LE), and arginine 134 each bind S-adenosyl-L-methionine.

Belongs to the methyltransferase superfamily. RNA methyltransferase RsmG family.

It is found in the cytoplasm. The enzyme catalyses guanosine(527) in 16S rRNA + S-adenosyl-L-methionine = N(7)-methylguanosine(527) in 16S rRNA + S-adenosyl-L-homocysteine. In terms of biological role, specifically methylates the N7 position of guanine in position 527 of 16S rRNA. The protein is Ribosomal RNA small subunit methyltransferase G of Rhodospirillum rubrum (strain ATCC 11170 / ATH 1.1.1 / DSM 467 / LMG 4362 / NCIMB 8255 / S1).